A 162-amino-acid polypeptide reads, in one-letter code: NADH-quinone oxidoreductase subunit I (162 aa).

4Fe-4S ferredoxin-type domains lie at 52–82 (LRRYPNGEERCIACKLCEAVCPAQAITIEAG) and 93–122 (VRYDIDMVKCIYCGLCQEACPVDAIVEGPN). Residues Cys-62, Cys-65, Cys-68, Cys-72, Cys-102, Cys-105, Cys-108, and Cys-112 each contribute to the [4Fe-4S] cluster site.

Belongs to the complex I 23 kDa subunit family. NDH-1 is composed of 14 different subunits. Subunits NuoA, H, J, K, L, M, N constitute the membrane sector of the complex. [4Fe-4S] cluster serves as cofactor.

The protein resides in the cell inner membrane. The enzyme catalyses a quinone + NADH + 5 H(+)(in) = a quinol + NAD(+) + 4 H(+)(out). Functionally, NDH-1 shuttles electrons from NADH, via FMN and iron-sulfur (Fe-S) centers, to quinones in the respiratory chain. The immediate electron acceptor for the enzyme in this species is believed to be ubiquinone. Couples the redox reaction to proton translocation (for every two electrons transferred, four hydrogen ions are translocated across the cytoplasmic membrane), and thus conserves the redox energy in a proton gradient. This is NADH-quinone oxidoreductase subunit I from Nitrobacter winogradskyi (strain ATCC 25391 / DSM 10237 / CIP 104748 / NCIMB 11846 / Nb-255).